A 123-amino-acid polypeptide reads, in one-letter code: uncharacterized protein (123 aa).

It to M.tuberculosis Rv0477.

This is an uncharacterized protein from Mycobacterium leprae (strain TN).